The sequence spans 713 residues: Early transcription factor 82 kDa subunit (713 aa).

This sequence belongs to the poxviridae VETF large subunit family. Heterodimer of a 70 kDa and a 82 kDa subunit. Part of the early transcription complex composed of ETF, RAP94, and the DNA-directed RNA polymerase.

In terms of biological role, acts with RNA polymerase to initiate transcription from early gene promoters. Is recruited by the RPO-associated protein of 94 kDa (RAP94) to form the early transcription complex, which also contains the core RNA polymerase. ETF heterodimer binds to early gene promoters. This chain is Early transcription factor 82 kDa subunit (VETFL), found in Yaba monkey tumor virus (strain VR587) (YMTV).